The sequence spans 94 residues: Protein SpdA (94 aa).

A helical membrane pass occupies residues 41–68 (GPILLALVAAGGSVGVVMTLCLLLQTAA).

The protein localises to the cell membrane. Its function is as follows. Involved in plasmid transfer. This chain is Protein SpdA (spdA), found in Streptomyces lividans.